Reading from the N-terminus, the 280-residue chain is Chaperone protein LppX (280 aa).

The first 18 residues, 1–18 (MRKWLIFLLIAAVAGLSA), serve as a signal peptide directing secretion. The N-palmitoyl cysteine moiety is linked to residue Cys-19. The S-diacylglycerol cysteine moiety is linked to residue Cys-19.

The protein resides in the cell membrane. In terms of biological role, is required for the expression of the adjacently encoded xylanase Xyn11E in an active form. LppX seems to act as a specific chaperone necessary for the correct folding of the xylanase during secretion across the cytoplasmic membrane. In Paenibacillus barcinonensis, this protein is Chaperone protein LppX.